Here is a 396-residue protein sequence, read N- to C-terminus: Putative 3-phosphoinositide-dependent protein kinase 2 (396 aa).

A compositionally biased stretch (polar residues) spans methionine 1–proline 11. Residues methionine 1–glutamate 53 are disordered. The region spanning phenylalanine 55–phenylalanine 315 is the Protein kinase domain. ATP-binding positions include serine 65–serine 67 and lysine 84. The PIF-pocket stretch occupies residues leucine 86–phenylalanine 130. ATP contacts are provided by residues serine 133–alanine 135 and glutamate 139. Residue aspartate 178 is the Proton acceptor of the active site. ATP is bound by residues glutamate 182 and aspartate 196.

This sequence belongs to the protein kinase superfamily. AGC Ser/Thr protein kinase family. PDPK1 subfamily. Post-translationally, phosphorylated on tyrosine and serine/threonine.

It is found in the cytoplasm. It localises to the membrane. The catalysed reaction is L-seryl-[protein] + ATP = O-phospho-L-seryl-[protein] + ADP + H(+). The enzyme catalyses L-threonyl-[protein] + ATP = O-phospho-L-threonyl-[protein] + ADP + H(+). Phosphorylates and activates not only PKB/AKT, but also PKA, PKC-zeta, RPS6KA1 and RPS6KB1. May play a general role in signaling processes and in development. The polypeptide is Putative 3-phosphoinositide-dependent protein kinase 2 (Homo sapiens (Human)).